A 137-amino-acid chain; its full sequence is Aspartate 1-decarboxylase (137 aa).

S25 serves as the catalytic Schiff-base intermediate with substrate; via pyruvic acid. S25 is modified (pyruvic acid (Ser)). T57 serves as a coordination point for substrate. Y58 acts as the Proton donor in catalysis. 73–75 (GAA) contacts substrate.

The protein belongs to the PanD family. Heterooctamer of four alpha and four beta subunits. The cofactor is pyruvate. Post-translationally, is synthesized initially as an inactive proenzyme, which is activated by self-cleavage at a specific serine bond to produce a beta-subunit with a hydroxyl group at its C-terminus and an alpha-subunit with a pyruvoyl group at its N-terminus.

Its subcellular location is the cytoplasm. The enzyme catalyses L-aspartate + H(+) = beta-alanine + CO2. The protein operates within cofactor biosynthesis; (R)-pantothenate biosynthesis; beta-alanine from L-aspartate: step 1/1. Catalyzes the pyruvoyl-dependent decarboxylation of aspartate to produce beta-alanine. The chain is Aspartate 1-decarboxylase from Thermobifida fusca (strain YX).